A 286-amino-acid chain; its full sequence is Protein PXR1 (286 aa).

The tract at residues 1 to 20 (MGLAGTKVKQRFGLDPRNTS) is disordered. Residues 25–71 (KSRFGHRYLESMGWAPGKGLGLVEHATTTHVKVSVKDDTVGLGAKLA) enclose the G-patch domain. The tract at residues 148-255 (EDESEVNFKS…PRKHDQISNV (108 aa)) is disordered. Residues 168–198 (PSRDSTSHAKRMRGDESKKSTRDQSKQERKE) are compositionally biased toward basic and acidic residues. The span at 199–230 (KKIKTEKKEKKEKKEKKEKKEKKEKKEKKEKK) shows a compositional bias: basic residues.

It belongs to the PINX1 family.

The protein resides in the nucleus. It is found in the nucleolus. In terms of biological role, involved in rRNA-processing at A0, A1 and A2 sites and negatively regulates telomerase. The protein is Protein PXR1 (PXR1) of Meyerozyma guilliermondii (strain ATCC 6260 / CBS 566 / DSM 6381 / JCM 1539 / NBRC 10279 / NRRL Y-324) (Yeast).